A 494-amino-acid chain; its full sequence is Amidophosphoribosyltransferase (494 aa).

Positions 1–10 (MFNYSGLNEE) are excised as a propeptide. Residue Cys-11 is the Nucleophile of the active site. Residues 11 to 231 (CGVFGIWNHP…AGEYVVINDK (221 aa)) form the Glutamine amidotransferase type-2 domain. Mg(2+)-binding residues include Ser-294, Asp-356, and Asp-357.

The protein in the C-terminal section; belongs to the purine/pyrimidine phosphoribosyltransferase family. Mg(2+) is required as a cofactor.

It carries out the reaction 5-phospho-beta-D-ribosylamine + L-glutamate + diphosphate = 5-phospho-alpha-D-ribose 1-diphosphate + L-glutamine + H2O. It participates in purine metabolism; IMP biosynthesis via de novo pathway; N(1)-(5-phospho-D-ribosyl)glycinamide from 5-phospho-alpha-D-ribose 1-diphosphate: step 1/2. Its function is as follows. Catalyzes the formation of phosphoribosylamine from phosphoribosylpyrophosphate (PRPP) and glutamine. The sequence is that of Amidophosphoribosyltransferase from Staphylococcus aureus (strain COL).